The following is a 126-amino-acid chain: Small nuclear ribonucleoprotein Sm D3 (126 aa).

Serine 2 bears the N-acetylserine mark. The region spanning 5–77 is the Sm domain; the sequence is VPIKVLHEAE…IRFLILPDML (73 aa). A run of 5 repeats spans residues 110–111, 112–113, 114–115, 116–117, and 118–119. The 5 X 2 AA tandem repeats of [RM]-G; required for interaction with SMN1 stretch occupies residues 110 to 119; that stretch reads RGRGRGMGRG.

The protein belongs to the snRNP core protein family. Core component of the spliceosomal U1, U2, U4 and U5 small nuclear ribonucleoproteins (snRNPs), the building blocks of the spliceosome. Most spliceosomal snRNPs contain a common set of Sm proteins, SNRPB, SNRPD1, SNRPD2, SNRPD3, SNRPE, SNRPF and SNRPG that assemble in a heptameric protein ring on the Sm site of the small nuclear RNA to form the core snRNP. Component of the U1 snRNP. The U1 snRNP is composed of the U1 snRNA and the 7 core Sm proteins SNRPB, SNRPD1, SNRPD2, SNRPD3, SNRPE, SNRPF and SNRPG, and at least three U1 snRNP-specific proteins SNRNP70/U1-70K, SNRPA/U1-A and SNRPC/U1-C. Component of the U4/U6-U5 tri-snRNP complex composed of the U4, U6 and U5 snRNAs and at least PRPF3, PRPF4, PRPF6, PRPF8, PRPF31, SNRNP200, TXNL4A, SNRNP40, SNRPB, SNRPD1, SNRPD2, SNRPD3, SNRPE, SNRPF, SNRPG, DDX23, CD2BP2, PPIH, SNU13, EFTUD2, SART1 and USP39, plus LSM2, LSM3, LSM4, LSM5, LSM6, LSM7 and LSM8. Component of the U7 snRNP complex, or U7 Sm protein core complex, that is composed of the U7 snRNA and at least LSM10, LSM11, SNRPB, SNRPD3, SNRPE, SNRPF and SNRPG; the complex does not contain SNRPD1 and SNRPD2. Component of the minor spliceosome, which splices U12-type introns. Part of the SMN-Sm complex that contains SMN1, GEMIN2/SIP1, DDX20/GEMIN3, GEMIN4, GEMIN5, GEMIN6, GEMIN7, GEMIN8, STRAP/UNRIP and the Sm proteins SNRPB, SNRPD1, SNRPD2, SNRPD3, SNRPE, SNRPF and SNRPG; catalyzes core snRNPs assembly. Forms a 6S pICln-Sm complex composed of CLNS1A/pICln, SNRPD1, SNRPD2, SNRPE, SNRPF and SNRPG; ring-like structure where CLNS1A/pICln mimics additional Sm proteins and which is unable to assemble into the core snRNP. Interacts (via C-terminus) with SMN1 (via Tudor domain); the interaction is direct. In terms of processing, methylated on arginine residues by PRMT5 and PRMT7; probable asymmetric dimethylation which is required for assembly and biogenesis of snRNPs.

Its subcellular location is the cytoplasm. It localises to the cytosol. The protein resides in the nucleus. Its function is as follows. Plays a role in pre-mRNA splicing as a core component of the spliceosomal U1, U2, U4 and U5 small nuclear ribonucleoproteins (snRNPs), the building blocks of the spliceosome. Component of both the pre-catalytic spliceosome B complex and activated spliceosome C complexes. As a component of the minor spliceosome, involved in the splicing of U12-type introns in pre-mRNAs. As part of the U7 snRNP it is involved in histone pre-mRNA 3'-end processing. This is Small nuclear ribonucleoprotein Sm D3 (SNRPD3) from Homo sapiens (Human).